The sequence spans 148 residues: Translation initiation factor 2 subunit beta (148 aa).

The protein belongs to the eIF-2-beta/eIF-5 family. As to quaternary structure, heterotrimer composed of an alpha, a beta and a gamma chain.

Its function is as follows. eIF-2 functions in the early steps of protein synthesis by forming a ternary complex with GTP and initiator tRNA. This is Translation initiation factor 2 subunit beta (eif2b) from Aeropyrum pernix (strain ATCC 700893 / DSM 11879 / JCM 9820 / NBRC 100138 / K1).